The chain runs to 140 residues: Putative pre-16S rRNA nuclease (140 aa).

It belongs to the YqgF nuclease family.

The protein resides in the cytoplasm. Functionally, could be a nuclease involved in processing of the 5'-end of pre-16S rRNA. The sequence is that of Putative pre-16S rRNA nuclease from Enterococcus faecalis (strain ATCC 700802 / V583).